The primary structure comprises 508 residues: Photosystem II CP47 reaction center protein (508 aa).

6 consecutive transmembrane segments (helical) span residues 21–36, 101–115, 140–156, 203–218, 237–252, and 457–472; these read AVHIMHTALVSGWAGS, IVFSGLCFLAAIWHW, GIHLFLAGVACFGFGAF, IAAGTLGILAGLFHLS, VLSSSIAAVFFAAFVV, and TFALLFFFGHIWHGAR.

Belongs to the PsbB/PsbC family. PsbB subfamily. As to quaternary structure, PSII is composed of 1 copy each of membrane proteins PsbA, PsbB, PsbC, PsbD, PsbE, PsbF, PsbH, PsbI, PsbJ, PsbK, PsbL, PsbM, PsbT, PsbX, PsbY, PsbZ, Psb30/Ycf12, at least 3 peripheral proteins of the oxygen-evolving complex and a large number of cofactors. It forms dimeric complexes. It depends on Binds multiple chlorophylls. PSII binds additional chlorophylls, carotenoids and specific lipids. as a cofactor.

It localises to the plastid. The protein localises to the chloroplast thylakoid membrane. One of the components of the core complex of photosystem II (PSII). It binds chlorophyll and helps catalyze the primary light-induced photochemical processes of PSII. PSII is a light-driven water:plastoquinone oxidoreductase, using light energy to abstract electrons from H(2)O, generating O(2) and a proton gradient subsequently used for ATP formation. The chain is Photosystem II CP47 reaction center protein from Hordeum vulgare (Barley).